The following is a 312-amino-acid chain: MKLFTLLLPALTSAHSLSTLLSTHPTLSTLHSLLKQFSLLDDFNTLANITVIAPTNQAYLDLANWGFNVSQIPAPVARALFQYHVLDGEWESESIIGKGKVVHTYLKPPVLTNVTAGAAVKLSSVDGTIMTESGLGVAGGVEDVNLRFDGGVLHTLNASMVLPHNITLTAQINGLGRFLELMNRAGVVAEFEGLKDVTVFVPHDDALEKADVGKMSKEQLASLLRGHVVPNRVLYGEVFGKKGGYKSSNGWEIHVGKTADGTLTVNGIKVVKEDVILYAGVAHVIDKVLVADRVEHKGDRSYLHLDAQKPLR.

Residues 1–16 (MKLFTLLLPALTSAHS) form the signal peptide. FAS1 domains follow at residues 17-160 (LSTL…NASM) and 162-289 (LPHN…DKVL). 5 N-linked (GlcNAc...) asparagine glycosylation sites follow: N48, N68, N113, N157, and N165.

The protein belongs to the fasciclin-like AGP family.

Its pathway is secondary metabolite biosynthesis. Its function is as follows. Fasciclin-like arabinogalactan protein; part of the gene cluster that mediates the biosynthesis of elsinochrome C, a perelyenequinone phytotoxin structurally similar to cercosporin. The first step of elsinochrome C biosynthesis is performed by the polyketide synthase elcA which catalyzes the formation of nor-toralactone. The starter unit acyltransferase (SAT) domain of elcA initiates polyketide extension by the selective utilization of acetyl-CoA, which is elongated to the heptaketide in the beta-ketoacyl synthase (KS) domain by successive condensations with six malonyl units introduced by the malonyl acyltransferase (MAT) domain. The product template (PT) domain catalyzes C4-C9 and C2-C11 aldol cyclizations and dehydrations to a trihydroxynaphthalene, which is thought to be delivered to the thioesterase (TE) domain for product release. The bifunctional enzyme elcB then methylates nor-toralactone to toralactone before conducting an unusual oxidative aromatic ring opening. The next step in perylenequinone biosynthesis is an O-methylation at the nascent OH-6 of the elcB product performed by the O-methyltransferase elcD. The oxidative coupling of the two monomeric naphthol units in perylenequinone biosynthesis is catalyzed by the FAD-dependent monooxygenase elcE and the multicopper oxidase elcG. ElcG might catalyze the first intermolecular coupling in a regio- and stereo-selective manner via a phenol radical coupling mechanism and the elcE could forge the second C-C bond intramolecularly via a hydride transfer mechanism. The fasciclin domain-containing protein elcF might also play a role duting this step. The last piece of the puzzle in the biosynthesis of elsinochrome C is the additional annulation by enolate coupling to afford the dihydrobenzo(ghi)perylenequinone system, catalyzed by the FAD-dependent monooxygenase elcH. In Phaeosphaeria nodorum (strain SN15 / ATCC MYA-4574 / FGSC 10173) (Glume blotch fungus), this protein is Fasciclin-like arabinogalactan protein elcF.